The primary structure comprises 408 residues: Argininosuccinate synthase (408 aa).

ATP is bound by residues Ala10–Ser18 and Ala37. Residues Tyr90 and Ser95 each coordinate L-citrulline. ATP is bound at residue Gly120. Residues Thr122, Asn126, and Asp127 each coordinate L-aspartate. L-citrulline is bound at residue Asn126. Residues Arg130, Ser181, Ser190, Glu266, and Tyr278 each contribute to the L-citrulline site.

It belongs to the argininosuccinate synthase family. Type 1 subfamily. Homotetramer.

It is found in the cytoplasm. It catalyses the reaction L-citrulline + L-aspartate + ATP = 2-(N(omega)-L-arginino)succinate + AMP + diphosphate + H(+). It participates in amino-acid biosynthesis; L-arginine biosynthesis; L-arginine from L-ornithine and carbamoyl phosphate: step 2/3. The chain is Argininosuccinate synthase from Laribacter hongkongensis (strain HLHK9).